Consider the following 448-residue polypeptide: Tubulin beta-1 chain (448 aa).

Residues Q11, E72, S141, G145, T146, G147, N207, and N229 each coordinate GTP. E72 is a binding site for Mg(2+). The segment at 424–448 (QQYQDAGMDDDEAEEAYEEEEPVEE) is disordered. Residues 430–448 (GMDDDEAEEAYEEEEPVEE) are compositionally biased toward acidic residues.

It belongs to the tubulin family. As to quaternary structure, dimer of alpha and beta chains. A typical microtubule is a hollow water-filled tube with an outer diameter of 25 nm and an inner diameter of 15 nM. Alpha-beta heterodimers associate head-to-tail to form protofilaments running lengthwise along the microtubule wall with the beta-tubulin subunit facing the microtubule plus end conferring a structural polarity. Microtubules usually have 13 protofilaments but different protofilament numbers can be found in some organisms and specialized cells. The cofactor is Mg(2+).

The protein resides in the cytoplasm. The protein localises to the cytoskeleton. In terms of biological role, tubulin is the major constituent of microtubules, a cylinder consisting of laterally associated linear protofilaments composed of alpha- and beta-tubulin heterodimers. Microtubules grow by the addition of GTP-tubulin dimers to the microtubule end, where a stabilizing cap forms. Below the cap, tubulin dimers are in GDP-bound state, owing to GTPase activity of alpha-tubulin. The polypeptide is Tubulin beta-1 chain (TUB1) (Colletotrichum gloeosporioides (Anthracnose fungus)).